A 396-amino-acid polypeptide reads, in one-letter code: Small ribosomal subunit protein mS27 (396 aa).

Belongs to the mitochondrion-specific ribosomal protein mS27 family. As to quaternary structure, component of the mitochondrial small ribosomal subunit (mt-SSU). Mature N.crassa 74S mitochondrial ribosomes consist of a small (37S) and a large (54S) subunit. The 37S small subunit contains a 16S ribosomal RNA (16S mt-rRNA) and 32 different proteins. The 54S large subunit contains a 23S rRNA (23S mt-rRNA) and 42 different proteins.

It is found in the mitochondrion. In terms of biological role, component of the mitochondrial ribosome (mitoribosome), a dedicated translation machinery responsible for the synthesis of mitochondrial genome-encoded proteins, including at least some of the essential transmembrane subunits of the mitochondrial respiratory chain. The mitoribosomes are attached to the mitochondrial inner membrane and translation products are cotranslationally integrated into the membrane. The sequence is that of Small ribosomal subunit protein mS27 (mrp13) from Neurospora crassa (strain ATCC 24698 / 74-OR23-1A / CBS 708.71 / DSM 1257 / FGSC 987).